The chain runs to 314 residues: Putative glycosyltransferase ORF31 (314 aa).

Belongs to the glycosyltransferase group 1 family.

The chain is Putative glycosyltransferase ORF31 from Haloarcula hispanica (His1V).